We begin with the raw amino-acid sequence, 325 residues long: NADH-quinone oxidoreductase subunit H (325 aa).

8 consecutive transmembrane segments (helical) span residues 8–28, 81–101, 114–134, 159–179, 186–206, 237–257, 265–285, and 304–324; these read VIDI…VVTC, GIFT…FAIV, IGVL…LFAG, FLGL…LGAI, LWNV…GVAV, FFVG…TLFF, LPPF…FILI, and ICLP…LYNA.

It belongs to the complex I subunit 1 family. NDH-1 is composed of 13 different subunits. Subunits NuoA, H, J, K, L, M, N constitute the membrane sector of the complex.

The protein localises to the cell inner membrane. It carries out the reaction a quinone + NADH + 5 H(+)(in) = a quinol + NAD(+) + 4 H(+)(out). Its function is as follows. NDH-1 shuttles electrons from NADH, via FMN and iron-sulfur (Fe-S) centers, to quinones in the respiratory chain. The immediate electron acceptor for the enzyme in this species is believed to be ubiquinone. Couples the redox reaction to proton translocation (for every two electrons transferred, four hydrogen ions are translocated across the cytoplasmic membrane), and thus conserves the redox energy in a proton gradient. This subunit may bind ubiquinone. The sequence is that of NADH-quinone oxidoreductase subunit H from Sodalis glossinidius (strain morsitans).